Reading from the N-terminus, the 72-residue chain is Omega-conotoxin-like SVIA mutant 1 (72 aa).

Residues 1–22 (MKLTCVVIVAVLLLTACQLITA) form the signal peptide. The propeptide occupies 23–48 (EDSRGAQKHRTLRSTARRSKSELTTR). Intrachain disulfides connect C49–C63, C56–C66, and C62–C71. At P55 the chain carries 4-hydroxyproline.

The protein belongs to the conotoxin O1 superfamily. Expressed by the venom duct.

It localises to the secreted. In terms of biological role, omega-conotoxins act at presynaptic membranes, they bind and block voltage-gated calcium channels (Cav). The chain is Omega-conotoxin-like SVIA mutant 1 from Conus striatus (Striated cone).